Reading from the N-terminus, the 140-residue chain is Putative pre-16S rRNA nuclease (140 aa).

This sequence belongs to the YqgF nuclease family.

It localises to the cytoplasm. Functionally, could be a nuclease involved in processing of the 5'-end of pre-16S rRNA. This Pasteurella multocida (strain Pm70) protein is Putative pre-16S rRNA nuclease.